The primary structure comprises 96 residues: Small ribosomal subunit protein bS6 (96 aa).

It belongs to the bacterial ribosomal protein bS6 family.

Functionally, binds together with bS18 to 16S ribosomal RNA. The protein is Small ribosomal subunit protein bS6 of Mycobacteroides abscessus (strain ATCC 19977 / DSM 44196 / CCUG 20993 / CIP 104536 / JCM 13569 / NCTC 13031 / TMC 1543 / L948) (Mycobacterium abscessus).